The following is a 436-amino-acid chain: Histidine--tRNA ligase (436 aa).

Belongs to the class-II aminoacyl-tRNA synthetase family. Homodimer.

The protein resides in the cytoplasm. The enzyme catalyses tRNA(His) + L-histidine + ATP = L-histidyl-tRNA(His) + AMP + diphosphate + H(+). This Psychrobacter sp. (strain PRwf-1) protein is Histidine--tRNA ligase.